Reading from the N-terminus, the 342-residue chain is BAG family molecular chaperone regulator 1 (342 aa).

The tract at residues 1-41 (MMKMMRNKPTNLPTAGMTNGGRGSGGGGGGGGRESGGRDLE) is disordered. Positions 8 to 17 (KPTNLPTAGM) are enriched in polar residues. Gly residues predominate over residues 18–34 (TNGGRGSGGGGGGGGRE). One can recognise a Ubiquitin-like domain in the interval 65–141 (PMIRVRIKYG…MVLIEDPLSQ (77 aa)). In terms of domain architecture, BAG spans 160–238 (AISDISLEVD…NYVETLDALK (79 aa)). Serine 298 is subject to Phosphoserine.

Binds to the ATPase domain of HSP70/HSC70 chaperones.

Co-chaperone that regulates diverse cellular pathways, such as programmed cell death and stress responses. The polypeptide is BAG family molecular chaperone regulator 1 (BAG1) (Arabidopsis thaliana (Mouse-ear cress)).